The chain runs to 635 residues: Probable potassium transport system protein Kup (635 aa).

The next 12 membrane-spanning stretches (helical) occupy residues 22-42 (LVIGAIGVVFGDIGTSPLYTL), 59-79 (VLGILSLVFWALMLVVTLKYV), 111-131 (MYVVGILGIFGASLFFGDGVI), 148-168 (APKLEAFVVPITLVVLGMLFL), 180-200 (AFGPITLVWFFALGAIGVYNM), 216-236 (VLFFVEHNWHAVFVLGAVVLA), 259-279 (WQFVVLPMLTLTYLGQGALVL), 297-317 (ALYPMIVLATAATVIASQALI), 349-369 (IYVPAVNWCLLLAVAVAVVGF), 378-398 (AYGVSVTGTMLITTVLMVIYA), 404-424 (VPAPLLWLFALVFLAVDCAFF), and 428-448 (IIKFLDGAWFPLLLGLILFTL).

This sequence belongs to the HAK/KUP transporter (TC 2.A.72) family.

Its subcellular location is the cell inner membrane. The enzyme catalyses K(+)(in) + H(+)(in) = K(+)(out) + H(+)(out). Functionally, transport of potassium into the cell. Likely operates as a K(+):H(+) symporter. This is Probable potassium transport system protein Kup from Xanthomonas oryzae pv. oryzae (strain KACC10331 / KXO85).